Consider the following 551-residue polypeptide: Cation/acetate symporter ActP (551 aa).

14 helical membrane passes run 5-25 (HWSA…ALTG), 34-54 (IQAI…TYWA), 77-97 (GLAI…SALV), 104-124 (GLIY…LIAE), 150-170 (LSAC…MVGA), 184-204 (VAVV…GMLA), 207-227 (WVQI…AIMV), 263-283 (ISAL…PHIL), 304-324 (GFIG…ILLV), 356-376 (FFLG…VAGL), 406-426 (VSKI…ILFE), 430-450 (IAFM…PIII), 469-489 (LGLS…VTIL), and 498-518 (YEYP…FFSI).

It belongs to the sodium:solute symporter (SSF) (TC 2.A.21) family.

The protein resides in the cell inner membrane. Its function is as follows. Transports acetate. This is Cation/acetate symporter ActP from Yersinia pestis bv. Antiqua (strain Antiqua).